A 444-amino-acid chain; its full sequence is UDP-N-acetylmuramoylalanine--D-glutamate ligase (444 aa).

Position 109–115 (109–115 (GSNGKTT)) interacts with ATP.

The protein belongs to the MurCDEF family.

The protein localises to the cytoplasm. The catalysed reaction is UDP-N-acetyl-alpha-D-muramoyl-L-alanine + D-glutamate + ATP = UDP-N-acetyl-alpha-D-muramoyl-L-alanyl-D-glutamate + ADP + phosphate + H(+). It participates in cell wall biogenesis; peptidoglycan biosynthesis. Its function is as follows. Cell wall formation. Catalyzes the addition of glutamate to the nucleotide precursor UDP-N-acetylmuramoyl-L-alanine (UMA). This Bacteroides thetaiotaomicron (strain ATCC 29148 / DSM 2079 / JCM 5827 / CCUG 10774 / NCTC 10582 / VPI-5482 / E50) protein is UDP-N-acetylmuramoylalanine--D-glutamate ligase.